The chain runs to 77 residues: Large ribosomal subunit protein bL28 (77 aa).

This sequence belongs to the bacterial ribosomal protein bL28 family.

The protein is Large ribosomal subunit protein bL28 of Leptothrix cholodnii (strain ATCC 51168 / LMG 8142 / SP-6) (Leptothrix discophora (strain SP-6)).